The sequence spans 360 residues: Hyaluronan and proteoglycan link protein 3 (360 aa).

Positions 1–17 (MGLLLLVPLLLLPGSYG) are cleaved as a signal peptide. Residues 48 to 164 (KLVVETPEET…ESGLVELELR (117 aa)) enclose the Ig-like V-type domain. 5 cysteine pairs are disulfide-bonded: C70–C146, C188–C259, C212–C233, C286–C356, and C311–C332. 2 consecutive Link domains span residues 166–261 (VVFP…FCFA) and 266–358 (GRVY…YCYR).

It belongs to the HAPLN family. As to expression, widely expressed with highest levels in spleen and placenta.

Its subcellular location is the secreted. It is found in the extracellular space. The protein resides in the extracellular matrix. Its function is as follows. May function in hyaluronic acid binding. The sequence is that of Hyaluronan and proteoglycan link protein 3 (HAPLN3) from Homo sapiens (Human).